A 213-amino-acid polypeptide reads, in one-letter code: Small ribosomal subunit protein uS3 (213 aa).

Positions 38–106 (IRSYIKKLLY…EFSLEVTEVR (69 aa)) constitute a KH type-2 domain.

Belongs to the universal ribosomal protein uS3 family. As to quaternary structure, part of the 30S ribosomal subunit. Forms a tight complex with proteins S10 and S14.

Functionally, binds the lower part of the 30S subunit head. Binds mRNA in the 70S ribosome, positioning it for translation. The chain is Small ribosomal subunit protein uS3 from Lawsonia intracellularis (strain PHE/MN1-00).